We begin with the raw amino-acid sequence, 257 residues long: Imidazole glycerol phosphate synthase subunit HisF (257 aa).

Catalysis depends on residues Asp-12 and Asp-131.

The protein belongs to the HisA/HisF family. As to quaternary structure, heterodimer of HisH and HisF.

It localises to the cytoplasm. The enzyme catalyses 5-[(5-phospho-1-deoxy-D-ribulos-1-ylimino)methylamino]-1-(5-phospho-beta-D-ribosyl)imidazole-4-carboxamide + L-glutamine = D-erythro-1-(imidazol-4-yl)glycerol 3-phosphate + 5-amino-1-(5-phospho-beta-D-ribosyl)imidazole-4-carboxamide + L-glutamate + H(+). It participates in amino-acid biosynthesis; L-histidine biosynthesis; L-histidine from 5-phospho-alpha-D-ribose 1-diphosphate: step 5/9. Functionally, IGPS catalyzes the conversion of PRFAR and glutamine to IGP, AICAR and glutamate. The HisF subunit catalyzes the cyclization activity that produces IGP and AICAR from PRFAR using the ammonia provided by the HisH subunit. The protein is Imidazole glycerol phosphate synthase subunit HisF of Burkholderia ambifaria (strain MC40-6).